A 365-amino-acid polypeptide reads, in one-letter code: 2'-hydroxybiphenyl-2-sulfinate desulfinase (365 aa).

The active site involves Cys27. 2'-hydroxybiphenyl-2-sulfinate-binding residues include Cys27, His60, and Arg70. Arg70 is a catalytic residue.

The protein belongs to the DszB desulfinase family. In terms of assembly, monomer.

It localises to the cytoplasm. It carries out the reaction 2'-hydroxybiphenyl-2-sulfinate + H2O = biphenyl-2-ol + sulfite + H(+). It functions in the pathway sulfur metabolism; dibenzothiophene degradation. Catalyzes the third and final step of the '4S' desulfurization pathway that removes covalently bound sulfur from dibenzothiophene (DBT) without breaking carbon-carbon bonds. Oxidizes 2-(2'-hydroxyphenyl)benzene sulphinate (HBPS) to 2-hydroxybiphenyl (HBP) plus sulfite. The rate-limiting step of the '4S' desulfurization pathway. In Rhodococcus erythropolis (Arthrobacter picolinophilus), this protein is 2'-hydroxybiphenyl-2-sulfinate desulfinase.